A 400-amino-acid chain; its full sequence is Large envelope protein (400 aa).

Methionine 1 is subject to N-acetylmethionine. The N-myristoyl glycine; by host moiety is linked to residue glycine 2. Residues 2–119 are pre-S1; sequence GAPLSTTRRG…PPLRDTHPQA (118 aa). Residues 2–174 form a pre-S region; it reads GAPLSTTRRG…FSKTGGPAMN (173 aa). Topologically, residues 2 to 181 are virion surface; in external conformation; that stretch reads GAPLSTTRRG…AMNMDNITSG (180 aa). The Intravirion; in internal conformation segment spans residues 2–253; sequence GAPLSTTRRG…PGYRWMCLRR (252 aa). N-linked (GlcNAc...) asparagine glycosylation is present at proline 4. The disordered stretch occupies residues 84 to 117; it reads VLTTLPADPPPASTNRRSGRKPTPVSPPLRDTHP. Positions 120–174 are pre-S2; that stretch reads MQWNSTQFHQALLDPRVRALYFPAGGSSSGTQNPAPTIASLTSSIFSKTGGPAMN. Residues 182–202 traverse the membrane as a helical segment; sequence LLGPLLVLQAVCFLLTKILTI. Over 203-253 the chain is Intravirion; in external conformation; sequence PQSLDSWWTSLNFLGGLPGCPGQNSQSPTSNHLPTSCPPTCPGYRWMCLRR. The helical transmembrane segment at 254–274 threads the bilayer; the sequence is FIIFLFILLLCLIFLLVLLDY. The Virion surface segment spans residues 275-348; it reads QGMLPVCPLL…WASARFSWLS (74 aa). An N-linked (GlcNAc...) asparagine; by host glycan is attached at asparagine 320. Residues 349-369 form a helical membrane-spanning segment; it reads LLVQFVQWCVGLSPTVWLLVI. Residues 370 to 375 lie on the Intravirion side of the membrane; that stretch reads WMIWYW. A helical membrane pass occupies residues 376–398; that stretch reads GPNLCSILSPFIPLLPIFCYLWV. The Virion surface portion of the chain corresponds to 399-400; it reads SI.

It belongs to the orthohepadnavirus major surface antigen family. In its internal form (Li-HBsAg), interacts with the capsid protein and with the isoform S. Interacts with host chaperone CANX. As to quaternary structure, associates with host chaperone CANX through its pre-S2 N glycan; this association may be essential for isoform M proper secretion. In terms of assembly, interacts with isoform L. Interacts with the antigens of satellite virus HDV (HDVAgs); this interaction is required for encapsidation of HDV genomic RNA. In terms of processing, isoform M is N-terminally acetylated by host at a ratio of 90%, and N-glycosylated by host at the pre-S2 region. Myristoylated.

It localises to the virion membrane. Functionally, the large envelope protein exists in two topological conformations, one which is termed 'external' or Le-HBsAg and the other 'internal' or Li-HBsAg. In its external conformation the protein attaches the virus to cell receptors and thereby initiating infection. This interaction determines the species specificity and liver tropism. This attachment induces virion internalization predominantly through caveolin-mediated endocytosis. The large envelope protein also assures fusion between virion membrane and endosomal membrane. In its internal conformation the protein plays a role in virion morphogenesis and mediates the contact with the nucleocapsid like a matrix protein. In terms of biological role, the middle envelope protein plays an important role in the budding of the virion. It is involved in the induction of budding in a nucleocapsid independent way. In this process the majority of envelope proteins bud to form subviral lipoprotein particles of 22 nm of diameter that do not contain a nucleocapsid. This Hepatitis B virus genotype F2 (isolate Brazil/w4B) (HBV-F) protein is Large envelope protein.